The sequence spans 902 residues: Leucine-rich repeat-containing G-protein coupled receptor 5A (902 aa).

The first 22 residues, 1–22 (MDTSRTSLFLCSVLYSLQLVGS), serve as a signal peptide directing secretion. Residues 23 to 557 (ARPGKQHRSC…DHLFGSWLTR (535 aa)) lie on the Extracellular side of the membrane. Intrachain disulfides connect Cys-32-Cys-38 and Cys-36-Cys-49. The LRRNT domain maps to 32-61 (CPTPCECEQDGMLVRVDCSDRGLTGLPRNI). 17 LRR repeats span residues 41-61 (DGML…PRNI), 62-85 (SIFT…ALHN), 86-109 (LHFL…AFAG), 111-133 (GSLK…ALQN), 134-157 (LRSL…SFNG), 159-181 (FSLR…ALES), 182-205 (LSAL…AFGN), 207-229 (SSLV…CFDG), 230-253 (LHSL…IKTL), 254-276 (KNLK…AFIG), 278-300 (PSLI…AFQH), 301-324 (LPEL…LTGT), 325-347 (TSLE…VCNQ), 348-372 (LPNL…GCQR), 374-393 (QKID…TFQQ), 394-417 (LVGL…SFSS), and 418-441 (LPSL…GLHG). Residues Asn-60 and Asn-74 are each glycosylated (N-linked (GlcNAc...) asparagine). The N-linked (GlcNAc...) asparagine glycan is linked to Asn-205. Cys-345 and Cys-370 are joined by a disulfide. A disulfide bridge links Cys-476 with Cys-537. Asn-496 is a glycosylation site (N-linked (GlcNAc...) asparagine). The helical transmembrane segment at 558–578 (IGVWLIVLLSFVCNALVIATV) threads the bilayer. Over 579-589 (FRPLSYVPSIK) the chain is Cytoplasmic. The chain crosses the membrane as a helical span at residues 590-610 (LLIGLIAIINTLMGLSSGVLA). The LRR 18 repeat unit spans residues 598-619 (INTLMGLSSGVLATVDALTFGN). Residues 611–634 (TVDALTFGNFAQYGAWWESGVGCQ) are Extracellular-facing. Cys-633 and Cys-708 are oxidised to a cystine. The helical transmembrane segment at 635 to 655 (ITGFLSVFAAETSVFLLTVAA) threads the bilayer. Residues 656–678 (LERGFSIKCTTKFETKSSFLSVK) lie on the Cytoplasmic side of the membrane. A helical transmembrane segment spans residues 679 to 699 (LSIVFCFLLSIIIAVSPLMSG). The Extracellular portion of the chain corresponds to 700–718 (STYGTSPFCFPLLFGDPSS). The helical transmembrane segment at 719–739 (MVFMVALVLLNSLCFLVMTVA) threads the bilayer. The Cytoplasmic segment spans residues 740-763 (YTKLYCSLEKGELENVWDCSMVKH). Residues 764–784 (IALLLFTNCILYCPVAFLSFS) form a helical membrane-spanning segment. Over 785–798 (SLLNLTFISPEVNK) the chain is Extracellular. N-linked (GlcNAc...) asparagine glycans are attached at residues Asn-788 and Asn-797. The chain crosses the membrane as a helical span at residues 799–819 (SILLLIIPLPACLNPLLYILF). At 820-902 (NPHFKEDIGS…LSAVAFVPCH (83 aa)) the chain is on the cytoplasmic side.

The protein belongs to the G-protein coupled receptor 1 family. As to expression, expressed in the developing epithelial stem cells of the intestine.

The protein resides in the cell membrane. Its subcellular location is the golgi apparatus. It is found in the trans-Golgi network membrane. Receptor for R-spondins that potentiates the canonical Wnt signaling pathway and acts as a stem cell marker of the intestinal epithelium and the hair follicle. Upon binding to R-spondins (RSPO1, RSPO2, RSPO3 or RSPO4), associates with phosphorylated LRP6 and frizzled receptors that are activated by extracellular Wnt receptors, triggering the canonical Wnt signaling pathway to increase expression of target genes. In contrast to classical G-protein coupled receptors, does not activate heterotrimeric G-proteins to transduce the signal. Involved in the development and/or maintenance of the adult intestinal stem cells during postembryonic development. In Xenopus laevis (African clawed frog), this protein is Leucine-rich repeat-containing G-protein coupled receptor 5A (lgr5-a).